Reading from the N-terminus, the 258-residue chain is Acyl-[acyl-carrier-protein]--UDP-N-acetylglucosamine O-acyltransferase (258 aa).

Belongs to the transferase hexapeptide repeat family. LpxA subfamily. Homotrimer.

It is found in the cytoplasm. The catalysed reaction is a (3R)-hydroxyacyl-[ACP] + UDP-N-acetyl-alpha-D-glucosamine = a UDP-3-O-[(3R)-3-hydroxyacyl]-N-acetyl-alpha-D-glucosamine + holo-[ACP]. Its pathway is glycolipid biosynthesis; lipid IV(A) biosynthesis; lipid IV(A) from (3R)-3-hydroxytetradecanoyl-[acyl-carrier-protein] and UDP-N-acetyl-alpha-D-glucosamine: step 1/6. Its function is as follows. Involved in the biosynthesis of lipid A, a phosphorylated glycolipid that anchors the lipopolysaccharide to the outer membrane of the cell. The polypeptide is Acyl-[acyl-carrier-protein]--UDP-N-acetylglucosamine O-acyltransferase (Ectopseudomonas mendocina (strain ymp) (Pseudomonas mendocina)).